The following is a 223-amino-acid chain: Guanylate kinase (223 aa).

Positions 1–22 (MTADGGPDVRHGTRPEPSGDGR) are disordered. Positions 7-19 (PDVRHGTRPEPSG) are enriched in basic and acidic residues. The Guanylate kinase-like domain occupies 21–201 (GRVVVLSGPS…ACAELVSLLV (181 aa)). 28 to 35 (GPSAVGKS) contacts ATP. The interval 204 to 223 (APDRHDTSGRTGRQTTSHPD) is disordered. The span at 212-223 (GRTGRQTTSHPD) shows a compositional bias: polar residues.

It belongs to the guanylate kinase family.

The protein resides in the cytoplasm. It catalyses the reaction GMP + ATP = GDP + ADP. Essential for recycling GMP and indirectly, cGMP. The protein is Guanylate kinase of Mycolicibacterium paratuberculosis (strain ATCC BAA-968 / K-10) (Mycobacterium paratuberculosis).